The chain runs to 33 residues: Defensin-1 (33 aa).

3 disulfide bridges follow: cysteine 4/cysteine 32, cysteine 6/cysteine 21, and cysteine 11/cysteine 31.

It belongs to the alpha-defensin family.

It localises to the secreted. In terms of biological role, has antibacterial activity against the Gram-negative bacterium E.coli and the Gram-positive bacteria L.monocytogenes and S.aureus. Has antifungal activity against C.albicans. The sequence is that of Defensin-1 from Papio hamadryas (Hamadryas baboon).